The primary structure comprises 155 residues: MPEAGAILPDGTVLGFDVGSRRIGVAVGTALGAGARAVAVINVHASGPDWDALDRVHKEWRPDGLVVGDPLTLDDKHQPARKRAHAFARQLRERYALPVVLIDERSSSVEAAQRFARERADGRKRRRDAEALDAMAAAVIVERWLAAPDQATLLP.

It belongs to the YqgF nuclease family.

Its subcellular location is the cytoplasm. Its function is as follows. Could be a nuclease involved in processing of the 5'-end of pre-16S rRNA. This chain is Putative pre-16S rRNA nuclease, found in Xanthomonas oryzae pv. oryzae (strain MAFF 311018).